The following is a 205-amino-acid chain: Metal-independent carbonic anhydrase (205 aa).

The first 24 residues, 1 to 24, serve as a signal peptide directing secretion; sequence MNLFKPRILVLFAATALISGIAIV. The hydrogencarbonate site is built by Thr106 and Tyr124.

It belongs to the iota-class carbonic anhydrase family. Homotetramer; dimer of dimers. Does not require a metal cofactor. is required as a cofactor.

The enzyme catalyses hydrogencarbonate + H(+) = CO2 + H2O. With respect to regulation, activity is not affected by EDTA or 2,6-pyridinedicarboxylic acid (PDA). Activity is not affected by addition of most divalent metal ions, except zinc ions which decrease the activity. Inhibited by the iodide ion. Catalyzes the hydration of carbon dioxide (CO2) to bicarbonate (HCO3(-)). Has only very low bicarbonate dehydration activity. May function even in metal-poor environments. The protein is Metal-independent carbonic anhydrase of Nostoc sp. (strain PCC 7120 / SAG 25.82 / UTEX 2576).